A 306-amino-acid chain; its full sequence is Palmitoyl-protein thioesterase ABHD10, mitochondrial (306 aa).

The transit peptide at 1-52 (MAVARLAAVAAWVPCRSWGCAAVPFGPHRGLSALLARIPQRAPRWLPACRQK) directs the protein to the mitochondrion. Residues 78 to 177 (IIFIPGYLSY…KVVALLGVAT (100 aa)) form the AB hydrolase-1 domain. Residues serine 152, aspartate 249, and histidine 279 each act as charge relay system in the active site.

This sequence belongs to the AB hydrolase superfamily.

It is found in the mitochondrion. The catalysed reaction is S-hexadecanoyl-L-cysteinyl-[protein] + H2O = L-cysteinyl-[protein] + hexadecanoate + H(+). The enzyme catalyses mycophenolic acid O-acyl-beta-D-glucuronide + H2O = mycophenolate + D-glucuronate + H(+). Its activity is regulated as follows. Inhibited by palmostatin-B. Functionally, acts as an acyl-protein thioesterase that hydrolyzes fatty acids from acylated residues in proteins. Regulates the mitochondrial S-depalmitoylation of the nucleophilic active site residue of peroxiredoxin-5/PRDX5, a key antioxidant protein, therefore modulating mitochondrial antioxidant ability. Also catalyzes the deglucuronidation of mycophenolic acid acyl-glucuronide, an active metabolite of the immunosuppressant drug mycophenolate. The polypeptide is Palmitoyl-protein thioesterase ABHD10, mitochondrial (ABHD10) (Pongo abelii (Sumatran orangutan)).